The following is a 61-amino-acid chain: GYKITIDTDKCTGDGECVDVCPVEVYELQDGKAVAVNEDECLGCESCVEVCEQDALTVEEN.

4Fe-4S ferredoxin-type domains follow at residues 2–31 and 32–61; these read YKIT…LQDG and KAVA…VEEN. The [3Fe-4S] cluster site is built by Cys11 and Cys17. [4Fe-4S] cluster contacts are provided by Cys21, Cys41, Cys44, and Cys47. Cys51 is a binding site for [3Fe-4S] cluster.

Requires [3Fe-4S] cluster as cofactor. The cofactor is [4Fe-4S] cluster.

Its function is as follows. Ferredoxins are iron-sulfur proteins that transfer electrons in a wide variety of metabolic reactions. The chain is Ferredoxin-3 from Desulfocurvibacter africanus (Desulfovibrio africanus).